The primary structure comprises 504 residues: Serine O-succinyltransferase (504 aa).

The transit peptide at 1–26 (MLRASSKRLQLSWQVFRRFQSSNPQL) directs the protein to the mitochondrion. A disordered region spans residues 49 to 70 (QACPNSVDPSASITSPSLSSGP). Residues 57–70 (PSASITSPSLSSGP) show a composition bias toward low complexity. Residues 117–395 (NAILLHTGLS…SAEEIIKLNE (279 aa)) enclose the AB hydrolase-1 domain. An important for substrate specificity region spans residues 124-127 (GLSA). The active-site Nucleophile is S221. Residue R290 coordinates substrate. Residues D443 and H480 contribute to the active site. D481 is a binding site for substrate.

The protein belongs to the AB hydrolase superfamily. MetX family.

It is found in the mitochondrion. The enzyme catalyses succinyl-CoA + L-serine = O-succinyl-L-serine + CoA. Its pathway is amino-acid biosynthesis; L-cysteine biosynthesis; L-cysteine from L-serine: step 1/2. In terms of biological role, transfers a succinyl group from succinyl-CoA to L-serine, forming succinyl-L-serine. Also has weak serine acetyl transferase activity and homoserine succinyl transferase activity. This Schizosaccharomyces pombe (strain 972 / ATCC 24843) (Fission yeast) protein is Serine O-succinyltransferase.